Here is a 199-residue protein sequence, read N- to C-terminus: Probable thymidylate kinase (199 aa).

Residue 13–20 (GIDGAGKT) participates in ATP binding.

Belongs to the thymidylate kinase family.

It carries out the reaction dTMP + ATP = dTDP + ADP. This Staphylothermus marinus (strain ATCC 43588 / DSM 3639 / JCM 9404 / F1) protein is Probable thymidylate kinase.